The sequence spans 184 residues: MKKQDISVKTVVAIGIGAAVFVILGRFVVIPTGFPNTNIETSYAFLALISAIFGPFAGLMTGLVGHAIKDFTTYGSAWWSWVICSGIIGCLYGWIGLKLNLSSGLFSRKSMIYFNIGQIIANIICWALIAPTLDILIYNEPANKVYTQGVISAVLNIISVGIIGTILLKAYASSQIKKGSLRKE.

Helical transmembrane passes span 11-31 (VVAI…VVIP), 44-64 (AFLA…TGLV), 77-97 (AWWS…WIGL), 111-131 (MIYF…LIAP), and 148-168 (QGVI…TILL).

It belongs to the UPF0397 family.

The protein localises to the cell membrane. This is UPF0397 protein SA2477 from Staphylococcus aureus (strain N315).